Here is a 433-residue protein sequence, read N- to C-terminus: UDP-N-acetylglucosamine 1-carboxyvinyltransferase (433 aa).

22 to 23 (KN) provides a ligand contact to phosphoenolpyruvate. R96 is a UDP-N-acetyl-alpha-D-glucosamine binding site. C120 acts as the Proton donor in catalysis. Position 120 is a 2-(S-cysteinyl)pyruvic acid O-phosphothioketal (C120). UDP-N-acetyl-alpha-D-glucosamine contacts are provided by residues 125 to 129 (RPIDL), D308, and I330.

This sequence belongs to the EPSP synthase family. MurA subfamily.

The protein localises to the cytoplasm. It carries out the reaction phosphoenolpyruvate + UDP-N-acetyl-alpha-D-glucosamine = UDP-N-acetyl-3-O-(1-carboxyvinyl)-alpha-D-glucosamine + phosphate. Its pathway is cell wall biogenesis; peptidoglycan biosynthesis. Its function is as follows. Cell wall formation. Adds enolpyruvyl to UDP-N-acetylglucosamine. The protein is UDP-N-acetylglucosamine 1-carboxyvinyltransferase of Koribacter versatilis (strain Ellin345).